An 89-amino-acid polypeptide reads, in one-letter code: Small ribosomal subunit protein bS18 (89 aa).

This sequence belongs to the bacterial ribosomal protein bS18 family. As to quaternary structure, part of the 30S ribosomal subunit. Forms a tight heterodimer with protein bS6.

Its function is as follows. Binds as a heterodimer with protein bS6 to the central domain of the 16S rRNA, where it helps stabilize the platform of the 30S subunit. This is Small ribosomal subunit protein bS18 from Treponema denticola (strain ATCC 35405 / DSM 14222 / CIP 103919 / JCM 8153 / KCTC 15104).